Here is a 356-residue protein sequence, read N- to C-terminus: MAIDENKQKALAAALGQIEKQFGKGSIMRLGEDRSMDVETISTGSLSLDIALGAGGLPMGRIVEIYGPESSGKTTLTLQVIAAAQREGKTCAFIDAEHALDPIYAKKLGVDIDNLLCSQPDTGEQALEICDALTRSGAVDVIIVDSVAALTPKAEIEGEIGDSHMGLAARMMSQAMRKLAGNLKNANTLLIFINQIRMKIGVMFGNPETTTGGNALKFYASVRLDIRRIGAVKDGDVVVGSETRVKVVKNKIAAPFKQAEFQILYGEGININGELVDLGVKHKLIEKAGAWYSYNGDKIGQGKANASNYLKENPAIAAELDKKLREMLLNGGNGEQPVAAATAEFADGVDETNEEF.

Position 67 to 74 (67 to 74 (GPESSGKT)) interacts with ATP.

The protein belongs to the RecA family.

It is found in the cytoplasm. Its function is as follows. Can catalyze the hydrolysis of ATP in the presence of single-stranded DNA, the ATP-dependent uptake of single-stranded DNA by duplex DNA, and the ATP-dependent hybridization of homologous single-stranded DNAs. It interacts with LexA causing its activation and leading to its autocatalytic cleavage. This Yersinia pseudotuberculosis serotype I (strain IP32953) protein is Protein RecA.